Consider the following 1182-residue polypeptide: NACHT, LRR and PYD domains-containing protein 1a (1182 aa).

The segment at 1–23 (MEESQSKQESSTKVAQHEGQEDV) is disordered. The NACHT domain occupies 133 to 442 (QLVIIEGAAG…EFFAAMSYIL (310 aa)). Position 139–146 (139–146 (GAAGIGKS)) interacts with ATP. 3 LRR repeats span residues 634–655 (NLEE…SLCT), 691–711 (SLTE…KMLC), and 720–743 (NLSI…RTLE). Residues 780-806 (QQRQQSGDKHMEPLGTEDEFWGPTGPV) form a disordered region. A ZU5 region spans residues 799 to 932 (FWGPTGPVTT…HYAVLENPSF (134 aa)). In terms of domain architecture, FIIND spans 799–1082 (FWGPTGPVTT…LRPALPKIAT (284 aa)). Residues 933–1082 (SPMGILLRMI…LRPALPKIAT (150 aa)) form a UPA region. In terms of domain architecture, CARD spans 1092–1175 (HFMDQHREQL…HLVMDILEKL (84 aa)).

The protein belongs to the NLRP family. Interacts (via LRR repeats) with BCL2 and BCL2L1 (via the loop between motifs BH4 and BH3). Interacts with NOD2; this interaction is enhanced in the presence of muramyl dipeptide (MDP) and increases IL1B release. Interacts with EIF2AK2/PKR; this interaction requires EIF2AK2 activity, is accompanied by EIF2AK2 autophosphorylation and promotes inflammasome assembly in response to danger-associated signals. Interacts with MEFV; this interaction targets Nlrp1a to degradation by autophagy, hence preventing excessive IL1B- and IL18-mediated inflammation. Interacts with DPP9; leading to inhibit activation of the inflammasome. DPP9 acts via formation of a ternary complex, composed of a DPP9 homodimer, one full-length Nlrp1a protein, and one cleaved C-terminus of Nlrp1a (NACHT, LRR and PYD domains-containing protein 1a, C-terminus). Interacts with DPP8; leading to inhibit activation of the inflammasome, probably via formation of a ternary complex with DPP8. As to quaternary structure, interacts with the C-terminal part of Nlrp1a (NACHT, LRR and PYD domains-containing protein 1a, C-terminus) in absence of pathogens and other damage-associated signals. In terms of assembly, interacts with the N-terminal part of Nlrp1a (NACHT, LRR and PYD domains-containing protein 1a, N-terminus) in absence of pathogens and other damage-associated signals. Homomultimer; forms the Nlrp1a inflammasome polymeric complex, a filament composed of homopolymers of this form in response to pathogens and other damage-associated signals. Interacts (via CARD domain) with CASP1 (via CARD domain); leading to CASP1 activation. Autocatalytically cleaved. Autocatalytic cleavage in FIIND region occurs constitutively, prior to activation signals, and is required for inflammasome activity (IL1B release), possibly by facilitating CASP1 binding. Both N- and C-terminal parts remain associated non-covalently. In terms of processing, ubiquitinated in response to pathogen-associated signals, leading to its degradation by the proteasome and subsequent release of the cleaved C-terminal part of the protein (NACHT, LRR and PYD domains-containing protein 1a, C-terminus), which polymerizes and forms the Nlrp1a inflammasome. As to expression, highly expressed in hematopoietic stem cells and progenitor cells of both myeloid and lymphoid origin. The expression is highly strain-dependent. Not expressed in Balb/cJ animals, but widely expressed in C57BL/6J. Expressed in macrophages resistant to Bacillus anthracis lethal toxin, but not in toxin-sensitive macrophages, except in CAST/EiJ strain.

The protein localises to the cytoplasm. It localises to the cytosol. It is found in the nucleus. The protein resides in the inflammasome. With respect to regulation, nlrp1a inflammasome is activated by pathogens and other damage-associated signals: activation promotes ubiquitination and degradation of the N-terminal part, releasing the cleaved C-terminal part of the protein (NACHT, LRR and PYD domains-containing protein 1a, C-terminus), which polymerizes and forms the Nlrp1a inflammasome. Nlrp1a inflammasome is inhibited by DPP8 and DPP9, which sequester the C-terminal fragment of Nlrp1a (NACHT, LRR and PYD domains-containing protein 1a, C-terminus) in a ternary complex, thereby preventing Nlrp1a oligomerization and activation. Nlrp1a inflammasome is activated by Val-boroPro (Talabostat, PT-100), an inhibitor of dipeptidyl peptidases DPP8 and DPP9. Val-boroPro relieves inhibition of DPP8 and/or DPP9 by promoting disruption of the ternary complex, releasing its C-terminal part from autoinhibition. Its function is as follows. Acts as the sensor component of the Nlrp1a inflammasome, which mediates inflammasome activation in response to various pathogen-associated signals, leading to subsequent pyroptosis. Inflammasomes are supramolecular complexes that assemble in the cytosol in response to pathogens and other damage-associated signals and play critical roles in innate immunity and inflammation. Acts as a recognition receptor (PRR): recognizes specific pathogens and other damage-associated signals, and mediates the formation of the inflammasome polymeric complex. In response to pathogen-associated signals, the N-terminal part of Nlrp1a is degraded by the proteasome, releasing the cleaved C-terminal part of the protein (NACHT, LRR and PYD domains-containing protein 1a, C-terminus), which polymerizes to initiate the formation of the inflammasome complex: the inflammasome recruits pro-caspase-1 (proCASP1) and promotes caspase-1 (CASP1) activation, which subsequently cleaves and activates inflammatory cytokines IL1B and IL18 and gasdermin-D (GSDMD), leading to pyroptosis. In the absence of GSDMD expression, the Nlrp1a inflammasome is able to recruit and activate CASP8, leading to activation of gasdermin-E (GSDME). Activation of Nlrp1a inflammasome is also required for HMGB1 secretion; the active cytokines and HMGB1 stimulate inflammatory responses. When activated in the bone marrow, induces the pyroptosis of hematopoietic stem cells and progenitor cells of both myeloid and lymphoid lineages, hence allowing the removal of damaged cells, and the release of IL1B, which induces granulopoiesis. Constitutes the precursor of the Nlrp1a inflammasome, which mediates autoproteolytic processing within the FIIND domain to generate the N-terminal and C-terminal parts, which are associated non-covalently in absence of pathogens and other damage-associated signals. In terms of biological role, regulatory part that prevents formation of the Nlrp1a inflammasome: in absence of pathogens and other damage-associated signals, interacts with the C-terminal part of Nlrp1a (NACHT, LRR and PYD domains-containing protein 1a, C-terminus), preventing activation of the Nlrp1a inflammasome. In response to pathogen-associated signals, this part is ubiquitinated and degraded by the proteasome, releasing the cleaved C-terminal part of the protein, which polymerizes and forms the Nlrp1a inflammasome. Functionally, constitutes the active part of the Nlrp1a inflammasome. In absence of pathogens and other damage-associated signals, interacts with the N-terminal part of Nlrp1a (NACHT, LRR and PYD domains-containing protein 1a, N-terminus), preventing activation of the Nlrp1a inflammasome. In response to pathogen-associated signals, the N-terminal part of Nlrp1a is degraded by the proteasome, releasing this form, which polymerizes to form the Nlrp1a inflammasome complex: the Nlrp1a inflammasome complex then directly recruits pro-caspase-1 (proCASP1) and promotes caspase-1 (CASP1) activation, leading to gasdermin-D (GSDMD) cleavage and subsequent pyroptosis. The protein is NACHT, LRR and PYD domains-containing protein 1a of Mus musculus (Mouse).